A 621-amino-acid chain; its full sequence is Rab11 family-interacting protein 4A (621 aa).

2 consecutive EF-hand domains span residues 14-49 and 47-82; these read AFLKKLKEVFDVCDEDADGYIRVEHFVDLGLQFGQG and GQGDEVKKFAKYLDPNAHGRINFKDFCHGVFAIKGC. Ca(2+)-binding residues include Asp-27, Asp-29, Asp-31, Tyr-33, His-38, Asp-60, Asn-62, Arg-66, and Asp-71. Disordered stretches follow at residues 132–172 and 203–243; these read YSDE…KEEG and DYGE…GQTP. Low complexity predominate over residues 151–161; it reads AADSGAGSESS. Over residues 162–172 the composition is skewed to basic and acidic residues; it reads EGGRQDDKEEG. Positions 225–243 are enriched in polar residues; the sequence is TNGFSDLGSSLPSSAGQTP. A coiled-coil region spans residues 348–556; the sequence is DLKSKLKQEN…LNGQILSLSL (209 aa). The FIP-RBD domain occupies 558 to 620; that stretch reads EAKNLFACHT…DHNPSILEIK (63 aa).

As to quaternary structure, homodimer. Forms a complex with Rab11 (rab11a or rab11b) and arf6. In terms of tissue distribution, isoform 1 is predominantly expressed in neural tissues. Isoform B is expressed ubiquitously. In the developing retina, it is expressed in progenitors throughout the retina at early stages and becomes restricted to the ganglion cell layer and ciliary marginal zone as differentiation proceeds.

The protein localises to the recycling endosome membrane. The protein resides in the cleavage furrow. It localises to the midbody. It is found in the cytoplasmic vesicle. Acts as a regulator of endocytic traffic by participating in membrane delivery. Required for the abscission step in cytokinesis, possibly by acting as an 'address tag' delivering recycling endosome membranes to the cleavage furrow during late cytokinesis. May play a role in differentiation during retinal development. The chain is Rab11 family-interacting protein 4A (rab11fip4a) from Danio rerio (Zebrafish).